The primary structure comprises 105 residues: MSSNQNIKIRLKSFDHRLIDLSTREIVDTAKRTGAQIRGPIPLPIRKEKFTVLTSPHVNKDARDQYELRTHKRLVVIVHPTEKTVDALMKLDLAAGVDVQISLDD.

It belongs to the universal ribosomal protein uS10 family. Part of the 30S ribosomal subunit.

Functionally, involved in the binding of tRNA to the ribosomes. The sequence is that of Small ribosomal subunit protein uS10 from Legionella pneumophila (strain Paris).